Here is a 406-residue protein sequence, read N- to C-terminus: Arginine biosynthesis bifunctional protein ArgJ (406 aa).

6 residues coordinate substrate: Thr156, Lys182, Thr193, Glu279, Asn401, and Thr406. Catalysis depends on Thr193, which acts as the Nucleophile.

It belongs to the ArgJ family. Heterotetramer of two alpha and two beta chains.

The protein localises to the cytoplasm. It carries out the reaction N(2)-acetyl-L-ornithine + L-glutamate = N-acetyl-L-glutamate + L-ornithine. It catalyses the reaction L-glutamate + acetyl-CoA = N-acetyl-L-glutamate + CoA + H(+). It functions in the pathway amino-acid biosynthesis; L-arginine biosynthesis; L-ornithine and N-acetyl-L-glutamate from L-glutamate and N(2)-acetyl-L-ornithine (cyclic): step 1/1. The protein operates within amino-acid biosynthesis; L-arginine biosynthesis; N(2)-acetyl-L-ornithine from L-glutamate: step 1/4. In terms of biological role, catalyzes two activities which are involved in the cyclic version of arginine biosynthesis: the synthesis of N-acetylglutamate from glutamate and acetyl-CoA as the acetyl donor, and of ornithine by transacetylation between N(2)-acetylornithine and glutamate. The chain is Arginine biosynthesis bifunctional protein ArgJ from Bacillus licheniformis (strain ATCC 14580 / DSM 13 / JCM 2505 / CCUG 7422 / NBRC 12200 / NCIMB 9375 / NCTC 10341 / NRRL NRS-1264 / Gibson 46).